The following is a 258-amino-acid chain: Short-chain dehydrogenase/reductase olcF (258 aa).

NADP(+) contacts are provided by Val12, Asp58, and Arg120. The active-site Proton donor is Ser138. NADP(+)-binding residues include Tyr152, Lys156, and Val185. Tyr152 (proton acceptor) is an active-site residue. Lys156 serves as the catalytic Lowers pKa of active site Tyr.

The protein belongs to the short-chain dehydrogenases/reductases (SDR) family.

It functions in the pathway secondary metabolite biosynthesis; terpenoid biosynthesis. Its function is as follows. Short-chain dehydrogenase/reductase; part of the gene cluster that mediates the biosynthesis of 15-deoxyoxalicine B. The first step of the pathway is the synthesis of nicotinyl-CoA from nicotinic acid by the nicotinic acid-CoA ligase olcI. Nicotinyl-CoA is then a substrate of polyketide synthase olcA to produce 4-hydroxy-6-(3-pyridinyl)-2H-pyran-2-one (HPPO) which is further prenylated by the polyprenyl transferase olcH to yield geranylgeranyl-HPPO. Geranylgeranyl pyrophosphate is provided by the cluster-specific geranylgeranyl pyrophosphate synthase olcC. The FAD-dependent monooxygenase olcE catalyzes the epoxidation of geranylgeranyl-HPPO and the terpene cyclase olcD catalyzes the cyclization of the terpenoid component, resulting in the formation of the tricyclic terpene moiety seen in predecaturin E. The cytochrome P450 monooxygenase then catalyzes the allylic oxidation of predecaturin E, which is followed by spirocylization with concomitant loss of one molecule of water to form decaturin E. Decaturin E is the substrate of the cytochrome P450 monooxygenase olcJ which hydroxylates it at the C-29 position to form decaturin F. The short-chain dehydrogenase/reductase olcF may catalyze the oxidation of decaturin F to generate the 29-hydroxyl-27-one intermediate, and subsequent hemiacetal formation probably leads to the formation of decaturin C. The dioxygenase olcK may be a peroxisomal enzyme that catalyzes the hydroxylation of decaturin C into decaturin A once decaturin C is shuttled into the peroxisome by the MFS transporter olcL. Finally the cytochrome P450 monooxygenase olcB catalyzes the oxidative rearrangement to yield 15-deoxyoxalicine B. In the absence of olcJ, decaturin E may be shunted to a pathway in which it is oxidized to a ketone, possibly by olcF, to form decaturin D, which undergoes further allylic oxidation to yield decaturin G. Moreover, in the absence of oclK or oclL, oclB can convert decaturin C into 15-deoxyoxalicine A. This chain is Short-chain dehydrogenase/reductase olcF, found in Penicillium canescens.